A 127-amino-acid chain; its full sequence is V-type proton ATPase subunit F (127 aa).

Belongs to the V-ATPase F subunit family. In terms of assembly, V-ATPase is a heteromultimeric enzyme made up of two complexes: the ATP-hydrolytic V1 complex and the proton translocation V0 complex. The V1 complex consists of three catalytic AB heterodimers that form a heterohexamer, three peripheral stalks each consisting of EG heterodimers, one central rotor including subunits D and F, and the regulatory subunits C and H. The proton translocation complex V0 consists of the proton transport subunit a, a ring of proteolipid subunits c9c'', rotary subunit d, subunits e and f, and the accessory subunits VhaAC45 and ATP6AP2.

In terms of biological role, subunit of the V1 complex of vacuolar(H+)-ATPase (V-ATPase), a multisubunit enzyme composed of a peripheral complex (V1) that hydrolyzes ATP and a membrane integral complex (V0) that translocates protons. V-ATPase is responsible for acidifying and maintaining the pH of intracellular compartments and in some cell types, is targeted to the plasma membrane, where it is responsible for acidifying the extracellular environment. The sequence is that of V-type proton ATPase subunit F from Aedes aegypti (Yellowfever mosquito).